A 704-amino-acid chain; its full sequence is Elongation factor G (704 aa).

The region spanning 8 to 291 (DKVRNIGIMA…AVVEYLASPV (284 aa)) is the tr-type G domain. Residues 17–24 (AHIDAGKT), 90–94 (DTPGH), and 144–147 (NKMD) each bind GTP.

Belongs to the TRAFAC class translation factor GTPase superfamily. Classic translation factor GTPase family. EF-G/EF-2 subfamily.

The protein localises to the cytoplasm. Functionally, catalyzes the GTP-dependent ribosomal translocation step during translation elongation. During this step, the ribosome changes from the pre-translocational (PRE) to the post-translocational (POST) state as the newly formed A-site-bound peptidyl-tRNA and P-site-bound deacylated tRNA move to the P and E sites, respectively. Catalyzes the coordinated movement of the two tRNA molecules, the mRNA and conformational changes in the ribosome. This chain is Elongation factor G, found in Pelodictyon phaeoclathratiforme (strain DSM 5477 / BU-1).